The sequence spans 233 residues: Homeobox protein not2 (233 aa).

The segment at residues 135-194 (LKRIRTVFTPEQLERLEKEFLKQQYMVGTERVDLASTLNLTETQVKVWFQNRRIKWRKQS) is a DNA-binding region (homeobox). Residues 212 to 233 (SSDHTDDSRETEEEEDDVDVEL) are disordered. Residues 220 to 233 (RETEEEEDDVDVEL) show a composition bias toward acidic residues.

In terms of tissue distribution, localized to the dorsal lip of the blastopore (Spemann organizer) during early gastrulation, after which expression continues in tissues derived from the organizer. Expressed in the notochord during mid-gastrulation, the chordoneural hinge, notochord and ventral spinal cord of the tailbud at stage 22, and finally the tip of the tail in the tadpole (stage 35).

It localises to the nucleus. Its function is as follows. Transcriptional repressor. Plays a fundamental role in notochord formation, acting within the mesodermal region. Acts downstream of gsc and upstream of chrd and foxa4-A/pintallavis. This Xenopus laevis (African clawed frog) protein is Homeobox protein not2.